A 63-amino-acid chain; its full sequence is Large ribosomal subunit protein eL24 (63 aa).

Cysteine 7, cysteine 10, cysteine 33, and cysteine 37 together coordinate Zn(2+). The C4-type zinc finger occupies 7–37 (CSFCGGSIEPGTGLMYVLRNGQILWFCSSKC).

This sequence belongs to the eukaryotic ribosomal protein eL24 family. As to quaternary structure, part of the 50S ribosomal subunit. Forms a cluster with proteins L3 and L14. Requires Zn(2+) as cofactor.

Binds to the 23S rRNA. In Aeropyrum pernix (strain ATCC 700893 / DSM 11879 / JCM 9820 / NBRC 100138 / K1), this protein is Large ribosomal subunit protein eL24.